The following is a 162-amino-acid chain: NADH-quinone oxidoreductase subunit I (162 aa).

2 consecutive 4Fe-4S ferredoxin-type domains span residues 54–83 (RRYE…INST) and 93–122 (SSYE…ETNI). [4Fe-4S] cluster-binding residues include cysteine 63, cysteine 66, cysteine 69, cysteine 73, cysteine 102, cysteine 105, cysteine 108, and cysteine 112.

This sequence belongs to the complex I 23 kDa subunit family. NDH-1 is composed of 14 different subunits. Subunits NuoA, H, J, K, L, M, N constitute the membrane sector of the complex. It depends on [4Fe-4S] cluster as a cofactor.

Its subcellular location is the cell inner membrane. It catalyses the reaction a quinone + NADH + 5 H(+)(in) = a quinol + NAD(+) + 4 H(+)(out). In terms of biological role, NDH-1 shuttles electrons from NADH, via FMN and iron-sulfur (Fe-S) centers, to quinones in the respiratory chain. The immediate electron acceptor for the enzyme in this species is believed to be ubiquinone. Couples the redox reaction to proton translocation (for every two electrons transferred, four hydrogen ions are translocated across the cytoplasmic membrane), and thus conserves the redox energy in a proton gradient. In Francisella tularensis subsp. holarctica (strain FTNF002-00 / FTA), this protein is NADH-quinone oxidoreductase subunit I.